We begin with the raw amino-acid sequence, 105 residues long: MSTPNTLNADFDLMRSVAGITDARNEEIRAMLQAFIGRMSGVPPSVWGGLAAARFQDVVDRWNAESTRLYHVLHAIADTIRHNEAALREAGQIHARHIAAAGGDL.

Belongs to the WXG100 family. CFP-10 subfamily. Forms a tight 1:1 complex with EsxT. Complex formation results in induction of alpha-helical conformation and stability against chemical denaturation.

Its subcellular location is the secreted. The chain is ESAT-6-like protein EsxU from Mycobacterium tuberculosis (strain ATCC 25618 / H37Rv).